Here is a 180-residue protein sequence, read N- to C-terminus: Adenosine 5'-phosphosulfate reductase (180 aa).

4 residues coordinate [4Fe-4S] cluster: cysteine 57, cysteine 58, cysteine 140, and cysteine 143. Cysteine 168 serves as the catalytic Nucleophile; cysteine thiosulfonate intermediate.

It belongs to the PAPS reductase family. CysH subfamily. It depends on [4Fe-4S] cluster as a cofactor.

It localises to the cytoplasm. The enzyme catalyses [thioredoxin]-disulfide + sulfite + AMP + 2 H(+) = adenosine 5'-phosphosulfate + [thioredoxin]-dithiol. Its pathway is sulfur metabolism; hydrogen sulfide biosynthesis; sulfite from sulfate. Catalyzes the formation of sulfite from adenosine 5'-phosphosulfate (APS) using thioredoxin as an electron donor. The protein is Adenosine 5'-phosphosulfate reductase of Rhizobium tropici.